Here is a 114-residue protein sequence, read N- to C-terminus: Vacuolar ATPase assembly integral membrane protein VMA21 (114 aa).

The Cytoplasmic portion of the chain corresponds to 1–39 (MATRRIISQEKTLLEKDDSIGSSPAADEKSNIAPAVPTS). Residues 40–60 (VIMKLLAFTLGMIVIPIGSYF) form a helical membrane-spanning segment. The Lumenal portion of the chain corresponds to 61–73 (ATVDSVFNGNSTY). The helical transmembrane segment at 74–94 (AGALAAIMANVVLIGYIFVAM) threads the bilayer. Over 95 to 114 (AEDQSDQQEGGGPGDGKKDR) the chain is Cytoplasmic. The Prevents secretion from ER signature appears at 111–114 (KKDR).

It belongs to the VMA21 family.

Its subcellular location is the endoplasmic reticulum membrane. The protein resides in the endoplasmic reticulum-Golgi intermediate compartment membrane. It is found in the cytoplasmic vesicle. The protein localises to the COPII-coated vesicle membrane. Required for the assembly of the V0 complex of the vacuolar ATPase (V-ATPase) in the endoplasmic reticulum. This chain is Vacuolar ATPase assembly integral membrane protein VMA21, found in Chaetomium globosum (strain ATCC 6205 / CBS 148.51 / DSM 1962 / NBRC 6347 / NRRL 1970) (Soil fungus).